The primary structure comprises 273 residues: Dermonecrotic toxin LhSicTox-alphaIA2av (273 aa).

Residue His-5 is part of the active site. The Mg(2+) site is built by Glu-25 and Asp-27. The active-site Nucleophile is His-41. Intrachain disulfides connect Cys-45–Cys-51 and Cys-47–Cys-190. Asp-85 contacts Mg(2+).

The protein belongs to the arthropod phospholipase D family. Class II subfamily. It depends on Mg(2+) as a cofactor. As to expression, expressed by the venom gland.

It is found in the secreted. It catalyses the reaction an N-(acyl)-sphingosylphosphocholine = an N-(acyl)-sphingosyl-1,3-cyclic phosphate + choline. It carries out the reaction an N-(acyl)-sphingosylphosphoethanolamine = an N-(acyl)-sphingosyl-1,3-cyclic phosphate + ethanolamine. The enzyme catalyses a 1-acyl-sn-glycero-3-phosphocholine = a 1-acyl-sn-glycero-2,3-cyclic phosphate + choline. The catalysed reaction is a 1-acyl-sn-glycero-3-phosphoethanolamine = a 1-acyl-sn-glycero-2,3-cyclic phosphate + ethanolamine. Its function is as follows. Dermonecrotic toxins cleave the phosphodiester linkage between the phosphate and headgroup of certain phospholipids (sphingolipid and lysolipid substrates), forming an alcohol (often choline) and a cyclic phosphate. This toxin acts on sphingomyelin (SM). It may also act on ceramide phosphoethanolamine (CPE), lysophosphatidylcholine (LPC) and lysophosphatidylethanolamine (LPE), but not on lysophosphatidylserine (LPS), and lysophosphatidylglycerol (LPG). It acts by transphosphatidylation, releasing exclusively cyclic phosphate products as second products. Induces dermonecrosis, hemolysis, increased vascular permeability, edema, inflammatory response, and platelet aggregation. The polypeptide is Dermonecrotic toxin LhSicTox-alphaIA2av (Loxosceles hirsuta (Recluse spider)).